We begin with the raw amino-acid sequence, 360 residues long: Peptide chain release factor 1 (360 aa).

An N5-methylglutamine modification is found at glutamine 235. The disordered stretch occupies residues 285–313 (KRQQAEASTRRNLLGSGDRSDRNRTYNFP).

Belongs to the prokaryotic/mitochondrial release factor family. In terms of processing, methylated by PrmC. Methylation increases the termination efficiency of RF1.

The protein localises to the cytoplasm. Peptide chain release factor 1 directs the termination of translation in response to the peptide chain termination codons UAG and UAA. The polypeptide is Peptide chain release factor 1 (Shigella boydii serotype 18 (strain CDC 3083-94 / BS512)).